A 199-amino-acid polypeptide reads, in one-letter code: Dephospho-CoA kinase (199 aa).

The 197-residue stretch at 3–199 folds into the DPCK domain; that stretch reads TLGVTGGIGS…ELYWAVTGGQ (197 aa). ATP is bound at residue 11–16; the sequence is GSGKTT.

The protein belongs to the CoaE family.

The protein localises to the cytoplasm. The enzyme catalyses 3'-dephospho-CoA + ATP = ADP + CoA + H(+). It functions in the pathway cofactor biosynthesis; coenzyme A biosynthesis; CoA from (R)-pantothenate: step 5/5. Catalyzes the phosphorylation of the 3'-hydroxyl group of dephosphocoenzyme A to form coenzyme A. The polypeptide is Dephospho-CoA kinase (Salinibacter ruber (strain DSM 13855 / M31)).